A 157-amino-acid chain; its full sequence is Putative dehydration-responsive element-binding protein 2H (157 aa).

The Nuclear localization signal signature appears at 5–21 (RKSRGTRDVAEILRKWR). The disordered stretch occupies residues 29–57 (ADSCIDGGGSKPIRKAPPKRSRKGCMKGK). Residues 40-54 (PIRKAPPKRSRKGCM) are compositionally biased toward basic residues. A DNA-binding region (AP2/ERF) is located at residues 66–123 (DYTGVRQRTWGKWVAEIREPGRGAKLWLGTFSSSYEAALAYDEASKAIYGQSARLNLP).

It belongs to the AP2/ERF transcription factor family. ERF subfamily.

Its subcellular location is the nucleus. Functionally, putative transcriptional activator that binds specifically to the DNA sequence 5'-[AG]CCGAC-3'. This chain is Putative dehydration-responsive element-binding protein 2H (DREB2H), found in Arabidopsis thaliana (Mouse-ear cress).